The following is a 544-amino-acid chain: Probable protein kinase UbiB (544 aa).

Positions 123–501 constitute a Protein kinase domain; it reads DFDLVPLASA…KRQQATGKFL (379 aa). ATP contacts are provided by residues 129–137 and Lys-152; that span reads LASASIAQV. The Proton acceptor role is filled by Asp-287. The next 2 membrane-spanning stretches (helical) occupy residues 496–516 and 519–539; these read ATGK…AILV and TYEQ…LFSW.

The protein belongs to the ABC1 family. UbiB subfamily.

It localises to the cell inner membrane. It functions in the pathway cofactor biosynthesis; ubiquinone biosynthesis [regulation]. In terms of biological role, is probably a protein kinase regulator of UbiI activity which is involved in aerobic coenzyme Q (ubiquinone) biosynthesis. The polypeptide is Probable protein kinase UbiB (Vibrio vulnificus (strain YJ016)).